The chain runs to 96 residues: MPAIEIGRICVKTRGREAGKKCVIVDIIDENFVLVTGPKDVNKVKRRRVNILHLEPTDKKIDINKGASDDEVKKKLEEAGLIEFMKQDVKPKIPVI.

Belongs to the eukaryotic ribosomal protein eL14 family.

This chain is Large ribosomal subunit protein eL14, found in Sulfurisphaera tokodaii (strain DSM 16993 / JCM 10545 / NBRC 100140 / 7) (Sulfolobus tokodaii).